We begin with the raw amino-acid sequence, 139 residues long: Large ribosomal subunit protein uL16 (139 aa).

Positions 1 to 17 are enriched in basic residues; it reads MLIPRKVKHRKQHHPGR. The tract at residues 1-24 is disordered; sequence MLIPRKVKHRKQHHPGRTGHATGG.

This sequence belongs to the universal ribosomal protein uL16 family. Part of the 50S ribosomal subunit.

In terms of biological role, binds 23S rRNA and is also seen to make contacts with the A and possibly P site tRNAs. The protein is Large ribosomal subunit protein uL16 of Clavibacter michiganensis subsp. michiganensis (strain NCPPB 382).